A 118-amino-acid chain; its full sequence is Large ribosomal subunit protein bL19 (118 aa).

Belongs to the bacterial ribosomal protein bL19 family.

In terms of biological role, this protein is located at the 30S-50S ribosomal subunit interface and may play a role in the structure and function of the aminoacyl-tRNA binding site. The protein is Large ribosomal subunit protein bL19 of Dictyoglomus thermophilum (strain ATCC 35947 / DSM 3960 / H-6-12).